The chain runs to 357 residues: Hyaluronidase (357 aa).

Residues 1–26 (MLLVTLFLFFLQALVNGDSCGSNCEK) form the signal peptide. 2 disulfides stabilise this stretch: Cys45–Cys334 and Cys211–Cys223. N-linked (GlcNAc...) asparagine glycosylation is found at Asn105 and Asn125. Glu135 serves as the catalytic Proton donor. Asn153 carries N-linked (GlcNAc...) asparagine glycosylation. A glycan (N-linked (GlcNAc...) asparagine) is linked at Asn351.

Belongs to the glycosyl hydrolase 56 family.

The protein localises to the secreted. It catalyses the reaction Random hydrolysis of (1-&gt;4)-linkages between N-acetyl-beta-D-glucosamine and D-glucuronate residues in hyaluronate.. Functionally, hydrolyzes high molecular weight hyaluronic acid to produce small oligosaccharides. The polypeptide is Hyaluronidase (Vespa magnifica (Hornet)).